The primary structure comprises 1156 residues: Chromosome partition protein Smc (1156 aa).

Pro-37–Asn-44 provides a ligand contact to ATP. Positions Ser-167–Ser-499 form a coiled coil. The SMC hinge domain occupies Lys-509–Ile-624. Residues Gly-654–Val-1001 are a coiled coil.

The protein belongs to the SMC family. As to quaternary structure, homodimer.

The protein resides in the cytoplasm. Required for chromosome condensation and partitioning. This chain is Chromosome partition protein Smc, found in Aquifex aeolicus (strain VF5).